The following is a 414-amino-acid chain: Nucleoporin NUP42 (414 aa).

The C3H1-type zinc finger occupies 1 to 25; the sequence is MPVCNFFLQGRCRYGDTCWNEHPTG. Disordered stretches follow at residues 24 to 73 and 200 to 221; these read TGGR…RGAA and PPAS…TSGF. 17 FG repeats span residues 43–44, 207–208, 214–215, 221–222, 233–234, 238–239, 257–258, 268–269, 280–281, 306–307, 325–326, 329–330, 335–336, 341–342, 347–348, 351–352, and 362–363; these read FG.

As to quaternary structure, probable component of the nuclear pore complex (NPC).

It localises to the nucleus. Its subcellular location is the nuclear pore complex. It is found in the nucleus membrane. Required for the export of mRNAs containing poly(A) tails from the nucleus into the cytoplasm. The polypeptide is Nucleoporin NUP42 (nup42) (Danio rerio (Zebrafish)).